A 298-amino-acid chain; its full sequence is Zinc import ATP-binding protein ZnuC (298 aa).

Residues I17 to R232 enclose the ABC transporter domain. G49 to S56 is an ATP binding site. Residues R273–A298 are disordered. Positions C276 to A298 are enriched in basic and acidic residues.

The protein belongs to the ABC transporter superfamily. Zinc importer (TC 3.A.1.15.5) family. As to quaternary structure, the complex is composed of two ATP-binding proteins (ZnuC), two transmembrane proteins (ZnuB) and a solute-binding protein (ZnuA).

Its subcellular location is the cell inner membrane. The catalysed reaction is Zn(2+)(out) + ATP(in) + H2O(in) = Zn(2+)(in) + ADP(in) + phosphate(in) + H(+)(in). Its function is as follows. Part of the ABC transporter complex ZnuABC involved in zinc import. Responsible for energy coupling to the transport system. The chain is Zinc import ATP-binding protein ZnuC from Brucella melitensis biotype 1 (strain ATCC 23456 / CCUG 17765 / NCTC 10094 / 16M).